Consider the following 86-residue polypeptide: Large ribosomal subunit protein uL24c (86 aa).

The protein belongs to the universal ribosomal protein uL24 family. As to quaternary structure, part of the 50S ribosomal subunit.

It is found in the plastid. Its subcellular location is the chloroplast. One of two assembly initiator proteins, it binds directly to the 5'-end of the 23S rRNA, where it nucleates assembly of the 50S subunit. In Heterosigma akashiwo (strain NIES-293 / 8280G21-1), this protein is Large ribosomal subunit protein uL24c (rpl24).